The following is a 61-amino-acid chain: Beta-insect depressant toxin BaIT2 (61 aa).

An LCN-type CS-alpha/beta domain is found at 1–61; it reads DGYIRRRDGC…TWKSETNTCG (61 aa). Cystine bridges form between Cys10/Cys60, Cys14/Cys35, Cys21/Cys42, and Cys25/Cys44.

The protein belongs to the long (4 C-C) scorpion toxin superfamily. Sodium channel inhibitor family. Beta subfamily. In terms of tissue distribution, expressed by the venom gland.

It is found in the secreted. In terms of biological role, depressant insect beta-toxins cause a transient contraction paralysis followed by a slow flaccid paralysis. They bind voltage-independently at site-4 of sodium channels (Nav) and shift the voltage of activation toward more negative potentials thereby affecting sodium channel activation and promoting spontaneous and repetitive firing. This toxin is active only on insects. This Buthacus arenicola (North African scorpion) protein is Beta-insect depressant toxin BaIT2.